The following is a 244-amino-acid chain: Na(+)-translocating NADH-quinone reductase subunit E (244 aa).

6 helical membrane-spanning segments follow: residues 11 to 31 (LLGIFLQATFIQNILLSTFLG), 47 to 67 (GLGMSVALVLTITGSINWLIH), 90 to 110 (FLELITFIVVIAAFTQILELL), 123 to 143 (GIFLPLIAVNCAILGGVLFGI), 153 to 173 (VVFSLGSGCGWWLAIVLFATI), and 189 to 209 (MGISFITTGLIAMAFMGLTGI).

Belongs to the NqrDE/RnfAE family. In terms of assembly, composed of six subunits; NqrA, NqrB, NqrC, NqrD, NqrE and NqrF.

It localises to the cell inner membrane. The enzyme catalyses a ubiquinone + n Na(+)(in) + NADH + H(+) = a ubiquinol + n Na(+)(out) + NAD(+). Its function is as follows. NQR complex catalyzes the reduction of ubiquinone-1 to ubiquinol by two successive reactions, coupled with the transport of Na(+) ions from the cytoplasm to the periplasm. NqrA to NqrE are probably involved in the second step, the conversion of ubisemiquinone to ubiquinol. The sequence is that of Na(+)-translocating NADH-quinone reductase subunit E from Chlamydia muridarum (strain MoPn / Nigg).